We begin with the raw amino-acid sequence, 462 residues long: General transcription factor IIH subunit 4 (462 aa).

It belongs to the TFB2 family. Component of the 7-subunit TFIIH core complex composed of XPB/ERCC3, XPD/ERCC2, GTF2H1, GTF2H2, GTF2H3, GTF2H4 and GTF2H5, which is active in NER. The core complex associates with the 3-subunit CDK-activating kinase (CAK) module composed of CCNH/cyclin H, CDK7 and MNAT1 to form the 10-subunit holoenzyme (holo-TFIIH) active in transcription. Part of TBP-based Pol II pre-initiation complex (PIC), in which Pol II core assembles with general transcription factors and other specific initiation factors including GTF2E1, GTF2E2, GTF2F1, GTF2F2, TCEA1, ERCC2, ERCC3, GTF2H2, GTF2H3, GTF2H4, GTF2H5, GTF2A1, GTF2A2, GTF2B and TBP; this large multi-subunit PIC complex mediates DNA unwinding and targets Pol II core to the transcription start site where the first phosphodiester bond forms.

Its subcellular location is the nucleus. In terms of biological role, component of the general transcription and DNA repair factor IIH (TFIIH) core complex, which is involved in general and transcription-coupled nucleotide excision repair (NER) of damaged DNA and, when complexed to CAK, in RNA transcription by RNA polymerase II. In NER, TFIIH acts by opening DNA around the lesion to allow the excision of the damaged oligonucleotide and its replacement by a new DNA fragment. In transcription, TFIIH has an essential role in transcription initiation. When the pre-initiation complex (PIC) has been established, TFIIH is required for promoter opening and promoter escape. Phosphorylation of the C-terminal tail (CTD) of the largest subunit of RNA polymerase II by the kinase module CAK controls the initiation of transcription. Functionally, stimulates the ATPase activity of TFIIH subunit XPB/ERCC3. The sequence is that of General transcription factor IIH subunit 4 (GTF2H4) from Homo sapiens (Human).